Consider the following 361-residue polypeptide: Chorismate synthase (361 aa).

Positions 48 and 54 each coordinate NADP(+). FMN-binding positions include Arg-125 to Ser-127, Asn-238 to Ala-239, Gly-278, Lys-293 to Ser-297, and Arg-319.

The protein belongs to the chorismate synthase family. In terms of assembly, homotetramer. The cofactor is FMNH2.

The catalysed reaction is 5-O-(1-carboxyvinyl)-3-phosphoshikimate = chorismate + phosphate. The protein operates within metabolic intermediate biosynthesis; chorismate biosynthesis; chorismate from D-erythrose 4-phosphate and phosphoenolpyruvate: step 7/7. Functionally, catalyzes the anti-1,4-elimination of the C-3 phosphate and the C-6 proR hydrogen from 5-enolpyruvylshikimate-3-phosphate (EPSP) to yield chorismate, which is the branch point compound that serves as the starting substrate for the three terminal pathways of aromatic amino acid biosynthesis. This reaction introduces a second double bond into the aromatic ring system. The polypeptide is Chorismate synthase (Sodalis glossinidius (strain morsitans)).